We begin with the raw amino-acid sequence, 630 residues long: Putative F-box/LRR-repeat protein At3g49150 (630 aa).

The 49-residue stretch at 15–63 folds into the F-box domain; it reads KDIISDLPEALICHILSFLPIEDSALTSVLSKKWQHLFAFRPNLEFDDA. 9 LRR repeats span residues 101 to 129, 152 to 178, 180 to 205, 228 to 253, 300 to 325, 337 to 362, 406 to 436, 437 to 465, and 567 to 590; these read CRDF…DLRC, RIET…YLNK, LLRH…FIMN, CEDV…VYHD, ISNV…QIPV, DQKA…IFDG, CDDY…KLFY, DTQI…FNAR, and DSSI…GLNW.

The chain is Putative F-box/LRR-repeat protein At3g49150 from Arabidopsis thaliana (Mouse-ear cress).